A 283-amino-acid polypeptide reads, in one-letter code: Nucleotide-binding protein THEYE_A0235 (283 aa).

12–19 (GLSGGGKT) is an ATP binding site. GTP is bound at residue 62-65 (DIRV).

The protein belongs to the RapZ-like family.

Functionally, displays ATPase and GTPase activities. The polypeptide is Nucleotide-binding protein THEYE_A0235 (Thermodesulfovibrio yellowstonii (strain ATCC 51303 / DSM 11347 / YP87)).